A 325-amino-acid polypeptide reads, in one-letter code: Release factor glutamine methyltransferase (325 aa).

S-adenosyl-L-methionine is bound by residues 141-145, aspartate 164, tryptophan 193, and asparagine 207; that span reads GTGSG. 207 to 210 contributes to the substrate binding site; the sequence is NPPY. Residues 306–325 form a disordered region; the sequence is LPPIHIDAKPSAPGNGPTKA.

The protein belongs to the protein N5-glutamine methyltransferase family. PrmC subfamily.

The enzyme catalyses L-glutaminyl-[peptide chain release factor] + S-adenosyl-L-methionine = N(5)-methyl-L-glutaminyl-[peptide chain release factor] + S-adenosyl-L-homocysteine + H(+). In terms of biological role, methylates the class 1 translation termination release factors RF1/PrfA and RF2/PrfB on the glutamine residue of the universally conserved GGQ motif. In Rhodospirillum rubrum (strain ATCC 11170 / ATH 1.1.1 / DSM 467 / LMG 4362 / NCIMB 8255 / S1), this protein is Release factor glutamine methyltransferase.